The following is a 313-amino-acid chain: UPF0761 membrane protein VS_0126 (313 aa).

6 consecutive transmembrane segments (helical) span residues Y41–L61, M104–D124, A139–A159, V185–V205, A217–I237, and A249–V269. A compositionally biased stretch (polar residues) spans E281–V290. Positions E281–K313 are disordered.

Belongs to the UPF0761 family.

The protein localises to the cell inner membrane. In Vibrio atlanticus (strain LGP32) (Vibrio splendidus (strain Mel32)), this protein is UPF0761 membrane protein VS_0126.